Consider the following 512-residue polypeptide: Ribose import ATP-binding protein RbsA (512 aa).

ABC transporter domains lie at 6-242 and 252-496; these read LELR…VNRE and VPAG…TGAQ. 38 to 45 provides a ligand contact to ATP; sequence GENGAGKS.

Belongs to the ABC transporter superfamily. Ribose importer (TC 3.A.1.2.1) family. As to quaternary structure, the complex is composed of an ATP-binding protein (RbsA), two transmembrane proteins (RbsC) and a solute-binding protein (RbsB).

The protein localises to the cell inner membrane. It catalyses the reaction D-ribose(out) + ATP + H2O = D-ribose(in) + ADP + phosphate + H(+). Its function is as follows. Part of the ABC transporter complex RbsABC involved in ribose import. Responsible for energy coupling to the transport system. In Pseudomonas putida (strain ATCC 47054 / DSM 6125 / CFBP 8728 / NCIMB 11950 / KT2440), this protein is Ribose import ATP-binding protein RbsA.